The following is a 488-amino-acid chain: Glutamyl-tRNA(Gln) amidotransferase subunit A (488 aa).

Residues Lys77 and Ser152 each act as charge relay system in the active site. Ser176 (acyl-ester intermediate) is an active-site residue.

Belongs to the amidase family. GatA subfamily. As to quaternary structure, heterotrimer of A, B and C subunits.

It carries out the reaction L-glutamyl-tRNA(Gln) + L-glutamine + ATP + H2O = L-glutaminyl-tRNA(Gln) + L-glutamate + ADP + phosphate + H(+). Allows the formation of correctly charged Gln-tRNA(Gln) through the transamidation of misacylated Glu-tRNA(Gln) in organisms which lack glutaminyl-tRNA synthetase. The reaction takes place in the presence of glutamine and ATP through an activated gamma-phospho-Glu-tRNA(Gln). In Streptococcus pneumoniae (strain 70585), this protein is Glutamyl-tRNA(Gln) amidotransferase subunit A.